Consider the following 99-residue polypeptide: Putative UPF0320 protein YDR543C (99 aa).

The disordered stretch occupies residues 80–99 (EKSPPKSPKHKNILSFNNNT).

Belongs to the UPF0320 family.

This Saccharomyces cerevisiae (strain ATCC 204508 / S288c) (Baker's yeast) protein is Putative UPF0320 protein YDR543C.